The following is a 184-amino-acid chain: Ras-related protein Rap-1b-like protein (184 aa).

10–18 contributes to the GTP binding site; that stretch reads GSRGVGKSA. The Effector region signature appears at 32-40; it reads YDPTIEDSY. Residues 57–61, 116–119, and 147–149 contribute to the GTP site; these read DTAGT, NKCD, and SAK. C181 is lipidated: S-geranylgeranyl cysteine. Positions 182–184 are cleaved as a propeptide — removed in mature form; it reads QLL.

Belongs to the small GTPase superfamily. Ras family.

It localises to the cell membrane. The protein localises to the cytoplasm. Its subcellular location is the cytosol. It carries out the reaction GTP + H2O = GDP + phosphate + H(+). Its function is as follows. Probable GTP-binding protein with intrinsic GTPase activity. This chain is Ras-related protein Rap-1b-like protein, found in Homo sapiens (Human).